Reading from the N-terminus, the 275-residue chain is Autophagy-related protein 5 (275 aa).

A Glycyl lysine isopeptide (Lys-Gly) (interchain with G-Cter in lgg-3/ATG12) cross-link involves residue Lys129. The span at 221–231 shows a compositional bias: low complexity; sequence LSSSSSSSTDS. A disordered region spans residues 221 to 241; it reads LSSSSSSSTDSQSEHPPRLIS.

This sequence belongs to the ATG5 family. Most likely a component of a complex at least containing atg-5, lgg-3/ATG12, atg-16.1 and/or atg-16.2. Interacts with lgg-3/ATG12. Interacts with atg-16.1 (via N-terminus) and atg-16.2 (via N-terminus). Conjugated to lgg-3/ATG12; which is essential for autophagy.

The protein resides in the preautophagosomal structure membrane. In terms of biological role, involved in autophagic vesicle formation. Conjugation with lgg-3/ATG12, through a ubiquitin-like conjugating system involving atg-7 as an E1-like activating enzyme and atg-10 as an E2-like conjugating enzyme, is essential for its function. Most likely a component of an atg-5-lgg-3-atg-16 complex that promotes autophagosome formation by associating with lgg-2, but not lgg-1, at the preautophagosomal membrane. Probably, as part of an atg-5-lgg-3-atg-16 complex, required for lgg-1 lipidation; the complex acts as an E3-like enzyme promoting atg-3-mediated lgg-1 lipidation. Furthermore, association with atg-16.2 is required for the nucleation of lgg-1 positive autophagic vesicles. This chain is Autophagy-related protein 5, found in Caenorhabditis elegans.